The sequence spans 179 residues: ATP synthase subunit delta (179 aa).

It belongs to the ATPase delta chain family. As to quaternary structure, F-type ATPases have 2 components, F(1) - the catalytic core - and F(0) - the membrane proton channel. F(1) has five subunits: alpha(3), beta(3), gamma(1), delta(1), epsilon(1). F(0) has three main subunits: a(1), b(2) and c(10-14). The alpha and beta chains form an alternating ring which encloses part of the gamma chain. F(1) is attached to F(0) by a central stalk formed by the gamma and epsilon chains, while a peripheral stalk is formed by the delta and b chains.

The protein resides in the cell inner membrane. Functionally, f(1)F(0) ATP synthase produces ATP from ADP in the presence of a proton or sodium gradient. F-type ATPases consist of two structural domains, F(1) containing the extramembraneous catalytic core and F(0) containing the membrane proton channel, linked together by a central stalk and a peripheral stalk. During catalysis, ATP synthesis in the catalytic domain of F(1) is coupled via a rotary mechanism of the central stalk subunits to proton translocation. In terms of biological role, this protein is part of the stalk that links CF(0) to CF(1). It either transmits conformational changes from CF(0) to CF(1) or is implicated in proton conduction. This is ATP synthase subunit delta from Acidithiobacillus ferridurans.